Consider the following 197-residue polypeptide: dITP/XTP pyrophosphatase (197 aa).

8 to 13 (TGNVGK) lines the substrate pocket. Mg(2+) is bound by residues E40 and D69. D69 (proton acceptor) is an active-site residue. Residues S70, 154–157 (FGYD), K177, and 182–183 (HR) each bind substrate.

It belongs to the HAM1 NTPase family. Homodimer. Mg(2+) serves as cofactor. Requires Mn(2+) as cofactor. The cofactor is Ni(2+).

It catalyses the reaction XTP + H2O = XMP + diphosphate + H(+). The enzyme catalyses dITP + H2O = dIMP + diphosphate + H(+). The catalysed reaction is ITP + H2O = IMP + diphosphate + H(+). Its function is as follows. Pyrophosphatase that catalyzes the hydrolysis of nucleoside triphosphates to their monophosphate derivatives, with a high preference for the non-canonical purine nucleotides XTP (xanthosine triphosphate), dITP (deoxyinosine triphosphate) and ITP. Can also efficiently hydrolyze 2'-deoxy-N-6-hydroxylaminopurine triphosphate (dHAPTP). Seems to function as a house-cleaning enzyme that removes non-canonical purine nucleotides from the nucleotide pool, thus preventing their incorporation into DNA/RNA and avoiding chromosomal lesions. To a much lesser extent, is also able to hydrolyze GTP, dGTP and dUTP, but shows very low activity toward the canonical nucleotides dATP, dCTP and dTTP and toward 8-oxo-dGTP, purine deoxyribose triphosphate, 2-aminopurine deoxyribose triphosphate and 2,6-diaminopurine deoxyribose triphosphate. In terms of biological role, genetic interactions among priB, dam, lexA, nagC, polA, rdgB, rdgB, rep and uup link the PriA-PriB replication restart pathway to DNA double-strand break repair. The polypeptide is dITP/XTP pyrophosphatase (Escherichia coli (strain K12)).